We begin with the raw amino-acid sequence, 306 residues long: UDP-3-O-acyl-N-acetylglucosamine deacetylase (306 aa).

Zn(2+) is bound by residues His79, His238, and Asp242. Residue His265 is the Proton donor of the active site.

This sequence belongs to the LpxC family. Requires Zn(2+) as cofactor.

It carries out the reaction a UDP-3-O-[(3R)-3-hydroxyacyl]-N-acetyl-alpha-D-glucosamine + H2O = a UDP-3-O-[(3R)-3-hydroxyacyl]-alpha-D-glucosamine + acetate. Its pathway is glycolipid biosynthesis; lipid IV(A) biosynthesis; lipid IV(A) from (3R)-3-hydroxytetradecanoyl-[acyl-carrier-protein] and UDP-N-acetyl-alpha-D-glucosamine: step 2/6. Functionally, catalyzes the hydrolysis of UDP-3-O-myristoyl-N-acetylglucosamine to form UDP-3-O-myristoylglucosamine and acetate, the committed step in lipid A biosynthesis. This is UDP-3-O-acyl-N-acetylglucosamine deacetylase from Hamiltonella defensa subsp. Acyrthosiphon pisum (strain 5AT).